A 311-amino-acid chain; its full sequence is Cytochrome f (311 aa).

The N-terminal stretch at 1 to 27 (MRRHLSLLIGSLVLGLSLLIAPAASWA) is a signal peptide. Positions 28, 48, 51, and 52 each coordinate heme. Residues 277-297 (IYGLLAFFAAVALAQIMLVLK) traverse the membrane as a helical segment.

It belongs to the cytochrome f family. In terms of assembly, the 4 large subunits of the cytochrome b6-f complex are cytochrome b6, subunit IV (17 kDa polypeptide, PetD), cytochrome f and the Rieske protein, while the 4 small subunits are PetG, PetL, PetM and PetN. The complex functions as a dimer. It depends on heme as a cofactor.

The protein resides in the cellular thylakoid membrane. Functionally, component of the cytochrome b6-f complex, which mediates electron transfer between photosystem II (PSII) and photosystem I (PSI), cyclic electron flow around PSI, and state transitions. The polypeptide is Cytochrome f (Parasynechococcus marenigrum (strain WH8102)).